The following is a 211-amino-acid chain: Rho-related GTP-binding protein RhoF (211 aa).

Position 1 is an N-acetylmethionine (methionine 1). Glycine 26–threonine 33 provides a ligand contact to GTP. The short motif at tyrosine 48–tyrosine 56 is the Effector region element. Residues aspartate 73–glutamine 77 and cysteine 131–aspartate 134 each bind GTP. A Cysteine methyl ester modification is found at cysteine 208. Cysteine 208 carries the S-geranylgeranyl cysteine lipid modification. Residues leucine 209 to leucine 211 constitute a propeptide, removed in mature form.

This sequence belongs to the small GTPase superfamily. Rho family.

It localises to the cell membrane. It is found in the cytoplasm. The protein localises to the cytoskeleton. Plasma membrane-associated small GTPase which cycles between an active GTP-bound and an inactive GDP-bound state. Causes the formation of thin, actin-rich surface projections called filopodia. Functions cooperatively with CDC42 and Rac to generate additional structures, increasing the diversity of actin-based morphology. The chain is Rho-related GTP-binding protein RhoF (RHOF) from Homo sapiens (Human).